Here is a 510-residue protein sequence, read N- to C-terminus: NAD(P)H-quinone oxidoreductase subunit 2 B, chloroplastic (510 aa).

13 helical membrane-spanning segments follow: residues 24 to 44 (LLLF…GLIL), 57 to 77 (IPWL…ALLF), 99 to 119 (IFQF…VEYI), 124 to 144 (MAIT…MFLC), 150 to 170 (ITIF…SGYT), 183 to 203 (YLLM…WLYG), 229 to 249 (ISIA…PAPF), 295 to 315 (WHLL…LIAI), 323 to 343 (MLAY…IVGD), 354 to 374 (YMLF…LFGL), 395 to 415 (ALSS…AGFF), 418 to 438 (LHLF…IGLL), and 484 to 504 (MIVC…IIAI).

It belongs to the complex I subunit 2 family. In terms of assembly, NDH is composed of at least 16 different subunits, 5 of which are encoded in the nucleus.

The protein localises to the plastid. The protein resides in the chloroplast thylakoid membrane. It catalyses the reaction a plastoquinone + NADH + (n+1) H(+)(in) = a plastoquinol + NAD(+) + n H(+)(out). The catalysed reaction is a plastoquinone + NADPH + (n+1) H(+)(in) = a plastoquinol + NADP(+) + n H(+)(out). NDH shuttles electrons from NAD(P)H:plastoquinone, via FMN and iron-sulfur (Fe-S) centers, to quinones in the photosynthetic chain and possibly in a chloroplast respiratory chain. The immediate electron acceptor for the enzyme in this species is believed to be plastoquinone. Couples the redox reaction to proton translocation, and thus conserves the redox energy in a proton gradient. In Drimys granadensis, this protein is NAD(P)H-quinone oxidoreductase subunit 2 B, chloroplastic.